The chain runs to 150 residues: Holo-[acyl-carrier-protein] synthase (150 aa).

Asp-8 and Glu-57 together coordinate Mg(2+).

The protein belongs to the P-Pant transferase superfamily. AcpS family. The cofactor is Mg(2+).

It is found in the cytoplasm. The catalysed reaction is apo-[ACP] + CoA = holo-[ACP] + adenosine 3',5'-bisphosphate + H(+). Its function is as follows. Transfers the 4'-phosphopantetheine moiety from coenzyme A to a Ser of acyl-carrier-protein. This Jannaschia sp. (strain CCS1) protein is Holo-[acyl-carrier-protein] synthase.